We begin with the raw amino-acid sequence, 1767 residues long: Endo-alpha-N-acetylgalactosaminidase (1767 aa).

The N-terminal stretch at 1–39 is a signal peptide; it reads MNKGLFEKRCKYSIRKFSLGVASVMIGAAFFGTSPVLAD. 2 stretches are compositionally biased toward basic and acidic residues: residues 61-75 and 84-111; these read KENDGRDFEAPKVGE and DGPKTEEELLALEKEKPAEEKPKEDKPA. Disordered regions lie at residues 61 to 124 and 301 to 324; these read KEND…VTPE and VKTDNQEGVKTEDTPAEKETGPEV. A compositionally biased stretch (low complexity) spans 112 to 124; it reads AAKPETPKTVTPE. The segment covering 304–324 has biased composition (basic and acidic residues); sequence DNQEGVKTEDTPAEKETGPEV. Positions 577, 579, 581, 583, and 588 each coordinate Ca(2+). Positions 602 to 893 are catalytic; sequence GWEKVKDITA…DVMTKYFQHF (292 aa). Aspartate 658 is a binding site for substrate. The Nucleophile role is filled by aspartate 764. Glutamate 796 acts as the Proton donor/acceptor in catalysis. Ca(2+) contacts are provided by aspartate 1233, glutamate 1235, glutamate 1281, tryptophan 1284, and aspartate 1411. The segment at 1711–1730 is disordered; it reads LASEQGKTPDYKQEIARPET. Basic and acidic residues predominate over residues 1717 to 1730; the sequence is KTPDYKQEIARPET. An LPXTG sorting signal motif is present at residues 1735-1739; sequence LPATG. At threonine 1738 the chain carries Pentaglycyl murein peptidoglycan amidated threonine. Residues 1739 to 1767 constitute a propeptide, removed by sortase; the sequence is GESQSDTALILASVSLALSALFVVKTKKD.

This sequence belongs to the glycosyl hydrolase 101 family. A subfamily.

Its subcellular location is the secreted. It localises to the cell wall. The catalysed reaction is a 3-O-[beta-D-galactosyl-(1-&gt;3)-N-acetyl-alpha-D-galactosaminyl]-L-threonyl-[protein] + H2O = beta-D-galactosyl-(1-&gt;3)-N-acetyl-D-galactosamine + L-threonyl-[protein]. The enzyme catalyses a 3-O-[beta-D-galactosyl-(1-&gt;3)-N-acetyl-alpha-D-galactosaminyl]-L-seryl-[protein] + H2O = beta-D-galactosyl-(1-&gt;3)-N-acetyl-D-galactosamine + L-seryl-[protein]. Functionally, involved in the breakdown of mucin-type O-linked glycans. Specifically removes the T-antigen disaccharide (Gal-beta-1,3-GalNAc-alpha) from extracellular host glycoproteins. Representative of a broadly important class of virulence factors. The sequence is that of Endo-alpha-N-acetylgalactosaminidase from Streptococcus pneumoniae serotype 4 (strain ATCC BAA-334 / TIGR4).